We begin with the raw amino-acid sequence, 430 residues long: UDP-N-acetylglucosamine 1-carboxyvinyltransferase 1 (430 aa).

Lys-22–Asn-23 is a phosphoenolpyruvate binding site. Arg-102 is a UDP-N-acetyl-alpha-D-glucosamine binding site. Catalysis depends on Cys-126, which acts as the Proton donor. Cys-126 bears the 2-(S-cysteinyl)pyruvic acid O-phosphothioketal mark. UDP-N-acetyl-alpha-D-glucosamine is bound by residues Arg-131–Leu-135, Lys-172–Val-175, Asp-317, and Ile-339.

This sequence belongs to the EPSP synthase family. MurA subfamily.

It localises to the cytoplasm. The enzyme catalyses phosphoenolpyruvate + UDP-N-acetyl-alpha-D-glucosamine = UDP-N-acetyl-3-O-(1-carboxyvinyl)-alpha-D-glucosamine + phosphate. It participates in cell wall biogenesis; peptidoglycan biosynthesis. Functionally, cell wall formation. Adds enolpyruvyl to UDP-N-acetylglucosamine. This chain is UDP-N-acetylglucosamine 1-carboxyvinyltransferase 1, found in Mesorhizobium japonicum (strain LMG 29417 / CECT 9101 / MAFF 303099) (Mesorhizobium loti (strain MAFF 303099)).